Reading from the N-terminus, the 689-residue chain is Glycine--tRNA ligase beta subunit (689 aa).

The protein belongs to the class-II aminoacyl-tRNA synthetase family. As to quaternary structure, tetramer of two alpha and two beta subunits.

Its subcellular location is the cytoplasm. It carries out the reaction tRNA(Gly) + glycine + ATP = glycyl-tRNA(Gly) + AMP + diphosphate. The chain is Glycine--tRNA ligase beta subunit from Acinetobacter baumannii (strain AB307-0294).